A 384-amino-acid chain; its full sequence is S-adenosylmethionine synthase (384 aa).

Residue His-15 coordinates ATP. Asp-17 is a binding site for Mg(2+). Glu-43 is a binding site for K(+). L-methionine-binding residues include Glu-56 and Gln-99. The flexible loop stretch occupies residues 99-109 (QSADINQGVDR). Residues 164–166 (DAK), 230–231 (RF), Asp-239, 245–246 (RK), Ala-262, and Lys-266 each bind ATP. Asp-239 contacts L-methionine. Position 270 (Lys-270) interacts with L-methionine.

Belongs to the AdoMet synthase family. Homotetramer; dimer of dimers. It depends on Mg(2+) as a cofactor. K(+) serves as cofactor.

The protein localises to the cytoplasm. The enzyme catalyses L-methionine + ATP + H2O = S-adenosyl-L-methionine + phosphate + diphosphate. Its pathway is amino-acid biosynthesis; S-adenosyl-L-methionine biosynthesis; S-adenosyl-L-methionine from L-methionine: step 1/1. Its function is as follows. Catalyzes the formation of S-adenosylmethionine (AdoMet) from methionine and ATP. The overall synthetic reaction is composed of two sequential steps, AdoMet formation and the subsequent tripolyphosphate hydrolysis which occurs prior to release of AdoMet from the enzyme. In Haemophilus influenzae (strain PittEE), this protein is S-adenosylmethionine synthase.